The following is a 215-amino-acid chain: Protein LURP-one-related 4 (215 aa).

Belongs to the LOR family.

In terms of biological role, might be related to the phospholipid scramblase and tubby-like superfamily of membrane tethered transcription factors. The protein is Protein LURP-one-related 4 of Arabidopsis thaliana (Mouse-ear cress).